We begin with the raw amino-acid sequence, 229 residues long: 3-dehydroquinate dehydratase (229 aa).

3-dehydroquinate is bound by residues 33–35 (EWR) and arginine 65. Histidine 121 serves as the catalytic Proton donor/acceptor. The active-site Schiff-base intermediate with substrate is lysine 146. Residues arginine 188, serine 207, and glutamine 211 each coordinate 3-dehydroquinate.

The protein belongs to the type-I 3-dehydroquinase family. Homodimer.

The enzyme catalyses 3-dehydroquinate = 3-dehydroshikimate + H2O. The protein operates within metabolic intermediate biosynthesis; chorismate biosynthesis; chorismate from D-erythrose 4-phosphate and phosphoenolpyruvate: step 3/7. Involved in the third step of the chorismate pathway, which leads to the biosynthesis of aromatic amino acids. Catalyzes the cis-dehydration of 3-dehydroquinate (DHQ) and introduces the first double bond of the aromatic ring to yield 3-dehydroshikimate. This Lactococcus lactis subsp. cremoris (strain MG1363) protein is 3-dehydroquinate dehydratase.